The sequence spans 349 residues: Desmethyl-yatein O-methyltransferase (349 aa).

Residues glycine 193, aspartate 216, aspartate 236, methionine 237, methionine 249, and lysine 250 each coordinate S-adenosyl-L-homocysteine. Histidine 254 (proton acceptor) is an active-site residue. Residues glutamate 282 and glutamate 314 contribute to the active site.

This sequence belongs to the class I-like SAM-binding methyltransferase superfamily. Cation-independent O-methyltransferase family. COMT subfamily. As to quaternary structure, homodimer. In terms of tissue distribution, mostly expressed in stems, and, to a lower extent, in leaves.

It catalyses the reaction (-)-5'-demethylyatein + S-adenosyl-L-methionine = (-)-yatein + S-adenosyl-L-homocysteine + H(+). Its pathway is aromatic compound metabolism; phenylpropanoid biosynthesis. O-methyltransferase involved in the biosynthesis of etoposide, a chemotherapeutic compound of the topoisomerase inhibitor family. Catalyzes the methylation of (-)-5'-demethylyatein to produce (-)-yatein. The chain is Desmethyl-yatein O-methyltransferase from Sinopodophyllum hexandrum (Himalayan may apple).